The sequence spans 170 residues: Adenine phosphoribosyltransferase (170 aa).

This sequence belongs to the purine/pyrimidine phosphoribosyltransferase family. In terms of assembly, homodimer.

Its subcellular location is the cytoplasm. The catalysed reaction is AMP + diphosphate = 5-phospho-alpha-D-ribose 1-diphosphate + adenine. Its pathway is purine metabolism; AMP biosynthesis via salvage pathway; AMP from adenine: step 1/1. Functionally, catalyzes a salvage reaction resulting in the formation of AMP, that is energically less costly than de novo synthesis. In Streptococcus sanguinis (strain SK36), this protein is Adenine phosphoribosyltransferase.